Consider the following 343-residue polypeptide: Glycerol-3-phosphate dehydrogenase [NAD(P)+] (343 aa).

NADPH is bound by residues Ser-15, Phe-16, Arg-36, and Lys-110. Sn-glycerol 3-phosphate contacts are provided by Lys-110 and Gly-138. Position 142 (Ala-142) interacts with NADPH. Sn-glycerol 3-phosphate-binding residues include Lys-193, Asp-246, Ser-256, Arg-257, and Asn-258. Lys-193 functions as the Proton acceptor in the catalytic mechanism. Arg-257 is a binding site for NADPH. Residue Glu-283 participates in NADPH binding.

Belongs to the NAD-dependent glycerol-3-phosphate dehydrogenase family.

It is found in the cytoplasm. It carries out the reaction sn-glycerol 3-phosphate + NAD(+) = dihydroxyacetone phosphate + NADH + H(+). It catalyses the reaction sn-glycerol 3-phosphate + NADP(+) = dihydroxyacetone phosphate + NADPH + H(+). It functions in the pathway membrane lipid metabolism; glycerophospholipid metabolism. Its function is as follows. Catalyzes the reduction of the glycolytic intermediate dihydroxyacetone phosphate (DHAP) to sn-glycerol 3-phosphate (G3P), the key precursor for phospholipid synthesis. The chain is Glycerol-3-phosphate dehydrogenase [NAD(P)+] from Alcanivorax borkumensis (strain ATCC 700651 / DSM 11573 / NCIMB 13689 / SK2).